The following is a 194-amino-acid chain: Exopolysaccharide II synthesis transcriptional activator ExpG (194 aa).

The HTH marR-type domain maps to 49 to 184; it reads YFELARVMER…AFQTLHRLEL (136 aa).

Transcriptional activator of genes for galactoglucan synthesis (exopolysaccharide II or EPS II). The chain is Exopolysaccharide II synthesis transcriptional activator ExpG (expG) from Rhizobium meliloti (strain 1021) (Ensifer meliloti).